A 203-amino-acid polypeptide reads, in one-letter code: LexA repressor (203 aa).

Residues 30 to 50 (VREICQAVSLKSTSTVHGHLK) constitute a DNA-binding region (H-T-H motif). Active-site for autocatalytic cleavage activity residues include S127 and K164.

This sequence belongs to the peptidase S24 family. Homodimer.

The catalysed reaction is Hydrolysis of Ala-|-Gly bond in repressor LexA.. In terms of biological role, represses a number of genes involved in the response to DNA damage (SOS response), including recA and lexA. In the presence of single-stranded DNA, RecA interacts with LexA causing an autocatalytic cleavage which disrupts the DNA-binding part of LexA, leading to derepression of the SOS regulon and eventually DNA repair. This Clostridium perfringens (strain ATCC 13124 / DSM 756 / JCM 1290 / NCIMB 6125 / NCTC 8237 / Type A) protein is LexA repressor.